Reading from the N-terminus, the 857-residue chain is Leucine--tRNA ligase (857 aa).

The 'HIGH' region motif lies at 42–52 (PYPSGTLHMGH). A 'KMSKS' region motif is present at residues 616–620 (KMSKS). Residue K619 participates in ATP binding.

The protein belongs to the class-I aminoacyl-tRNA synthetase family.

The protein localises to the cytoplasm. The enzyme catalyses tRNA(Leu) + L-leucine + ATP = L-leucyl-tRNA(Leu) + AMP + diphosphate. The chain is Leucine--tRNA ligase from Parasynechococcus marenigrum (strain WH8102).